Consider the following 356-residue polypeptide: Delta(7)-sterol 5(6)-desaturase (356 aa).

3 helical membrane-spanning segments follow: residues 87-107 (LTLYLITWLFGVCVYYLFAGL), 134-154 (QANIAFPIMAIFTVPWFLAEV), and 171-191 (WYDYLQIPFFIAFTDLCIYWI). The region spanning 179–303 (FFIAFTDLCI…FTTLWDRLGG (125 aa)) is the Fatty acid hydroxylase domain. The short motif at 192-196 (HRGLH) is the Histidine box-1 element. The Histidine box-2 motif lies at 205-209 (HKPHH). Residues 235 to 255 (YIFPFLFPLSKIASVAFFVFV) traverse the membrane as a helical segment. The short motif at 280–284 (HTMHH) is the Histidine box-3 element.

The protein belongs to the sterol desaturase family. Requires Fe cation as cofactor.

The protein localises to the endoplasmic reticulum membrane. The catalysed reaction is a Delta(7)-sterol + 2 Fe(II)-[cytochrome b5] + O2 + 2 H(+) = a Delta(5),Delta(7)-sterol + 2 Fe(III)-[cytochrome b5] + 2 H2O. It functions in the pathway steroid metabolism; ergosterol biosynthesis; ergosterol from zymosterol: step 3/5. Functionally, catalyzes the introduction of a C-5 double bond in the B ring of ergosterol. May contribute to the regulation of ergosterol biosynthesis. This is Delta(7)-sterol 5(6)-desaturase (ERG3) from Leptosphaeria maculans (Blackleg fungus).